The sequence spans 96 residues: Co-chaperonin GroES (96 aa).

This sequence belongs to the GroES chaperonin family. Heptamer of 7 subunits arranged in a ring. Interacts with the chaperonin GroEL.

Its subcellular location is the cytoplasm. Its function is as follows. Together with the chaperonin GroEL, plays an essential role in assisting protein folding. The GroEL-GroES system forms a nano-cage that allows encapsulation of the non-native substrate proteins and provides a physical environment optimized to promote and accelerate protein folding. GroES binds to the apical surface of the GroEL ring, thereby capping the opening of the GroEL channel. The chain is Co-chaperonin GroES from Citrifermentans bemidjiense (strain ATCC BAA-1014 / DSM 16622 / JCM 12645 / Bem) (Geobacter bemidjiensis).